The following is a 144-amino-acid chain: Ethylene-responsive transcription factor ERF019 (144 aa).

A DNA-binding region (AP2/ERF) is located at residues 13–72; that stretch reads KYKGIRRRKWGKWVSEIRVPGTRDRLWLGSFSTAEGAAVAHDVAFFCLHQPDSLESLNFP.

It belongs to the AP2/ERF transcription factor family. ERF subfamily.

The protein localises to the nucleus. Probably acts as a transcriptional activator. Binds to the GCC-box pathogenesis-related promoter element. May be involved in the regulation of gene expression by stress factors and by components of stress signal transduction pathways. The sequence is that of Ethylene-responsive transcription factor ERF019 (ERF019) from Arabidopsis thaliana (Mouse-ear cress).